The following is a 695-amino-acid chain: Lactotransferrin (695 aa).

Positions 1–6 (LGLCLA) are cleaved as a signal peptide. Transferrin-like domains are found at residues 12-339 (VRWC…NLRE) and 351-680 (VVWC…NLRR). Cystine bridges form between Cys-15–Cys-51 and Cys-25–Cys-42. Asp-66 contacts Fe(3+). Lys-79 is a catalytic residue. Residue Tyr-98 participates in Fe(3+) binding. Cystine bridges form between Cys-121–Cys-204, Cys-163–Cys-179, Cys-166–Cys-189, Cys-176–Cys-187, and Cys-237–Cys-251. The hydrogencarbonate site is built by Thr-123, Arg-127, Ala-129, and Gly-130. N-linked (GlcNAc...) asparagine glycosylation occurs at Asn-143. Position 198 (Tyr-198) interacts with Fe(3+). Residue His-259 participates in Fe(3+) binding. Ser-265 (nucleophile) is an active-site residue. Asn-287 is a glycosylation site (N-linked (GlcNAc...) asparagine). 2 cysteine pairs are disulfide-bonded: Cys-354-Cys-386 and Cys-364-Cys-377. Asp-401 serves as a coordination point for Fe(3+). 8 disulfide bridges follow: Cys-411-Cys-690, Cys-431-Cys-653, Cys-463-Cys-538, Cys-487-Cys-681, Cys-497-Cys-511, Cys-508-Cys-521, Cys-579-Cys-593, and Cys-631-Cys-636. Pro-436 contacts D-glucose. Tyr-439 serves as a coordination point for Fe(3+). Hydrogencarbonate is bound by residues Thr-465, Arg-469, Ala-471, and Ala-472. N-linked (GlcNAc...) asparagine glycosylation is present at Asn-482. Residue Tyr-532 participates in Fe(3+) binding. Asn-600 is a D-glucose binding site. Residue His-601 participates in Fe(3+) binding. Tyr-666 provides a ligand contact to D-glucose.

Belongs to the transferrin family. Monomer. Found in a complex with LTF, CLU, EPPIN and SEMG1. Found in a complex with MPO and LTF; interacts directly with CP, allows Fe(3+) incorporation into LTF and activation of CP ferroxidase activity. In terms of processing, poly-N-acetyllactosaminic carbohydrate moiety seems to be needed for TLR4 activation.

It is found in the secreted. It localises to the cytoplasmic granule. Its function is as follows. Transferrins are iron binding transport proteins which can bind two Fe(3+) ions in association with the binding of an anion, usually bicarbonate. In terms of biological role, major iron-binding and multifunctional protein found in exocrine fluids such as breast milk and mucosal secretions. Has antimicrobial activity, which depends on the extracellular cation concentration. Antimicrobial properties include bacteriostasis, which is related to its ability to sequester free iron and thus inhibit microbial growth, as well as direct bactericidal properties leading to the release of lipopolysaccharides from the bacterial outer membrane. Can also prevent bacterial biofilm development in P.aeruginosa infection. Has weak antifungal activity against C.albicans. Has anabolic, differentiating and anti-apoptotic effects on osteoblasts and can also inhibit osteoclastogenesis, possibly playing a role in the regulation of bone growth. Promotes binding of species C adenoviruses to epithelial cells, promoting adenovirus infection. Can inhibit papillomavirus infections. Stimulates the TLR4 signaling pathway leading to NF-kappa-B activation and subsequent pro-inflammatory cytokine production while also interfering with the lipopolysaccharide (LPS)-stimulated TLR4 signaling. Inhibits neutrophil granulocyte migration to sites of apoptosis, when secreted by apoptotic cells. Stimulates VEGFA-mediated endothelial cell migration and proliferation. Binds heparin, chondroitin sulfate and possibly other glycosaminoglycans (GAGs). Also binds specifically to pneumococcal surface protein A (PspA), the lipid A portion of bacterial lipopolysaccharide (LPS), lysozyme and DNA. Functionally, lactoferricin binds to the bacterial surface and is crucial for the bactericidal functions. Has some antiviral activity against papillomavirus infection. N-terminal region shows strong antifungal activity against C.albicans. Contains two BBXB heparin-binding consensus sequences that appear to form the predominate functional GAG-binding site. The lactotransferrin transferrin-like domain 1 functions as a serine protease of the peptidase S60 family that cuts arginine rich regions. This function contributes to the antimicrobial activity. Shows a preferential cleavage at -Arg-Ser-Arg-Arg-|- and -Arg-Arg-Ser-Arg-|-, and of Z-Phe-Arg-|-aminomethylcoumarin sites. The sequence is that of Lactotransferrin (LTF) from Equus caballus (Horse).